Consider the following 416-residue polypeptide: Antigen EG13 (416 aa).

An F-BAR domain is found at 1–247 (MIQERADIEK…TVAKVDADAD (247 aa)). The disordered stretch occupies residues 297–327 (LKTFTSPDRGGPIPGTTDSGSNISTSPVHTT). Positions 312–327 (TTDSGSNISTSPVHTT) are enriched in polar residues. The region spanning 361–416 (RPGVPIRALYDYVGVEADELSFNSGDLFEKLEDEDEQGWCKGRKDGRVGLYPRQLR) is the SH3 domain.

The sequence is that of Antigen EG13 (EG13) from Echinococcus granulosus (Hydatid tapeworm).